Consider the following 477-residue polypeptide: Mitochondrial adenyl nucleotide antiporter SLC25A24 (477 aa).

The interval 1–173 (MLRWLRDFVL…RFWKHSTGID (173 aa)) is regulatory N-terminal domain. The Mitochondrial intermembrane portion of the chain corresponds to 1 to 197 (MLRWLRDFVL…EKKSGQWWRQ (197 aa)). 4 consecutive EF-hand domains span residues 19–54 (EQPTRYETLFQALDRNGDGVVDIGELQEGLRNLGIP), 55–88 (LGQDAEEKIFTTGDVNKDGKLDFEEFMKYLKDHE), 86–121 (DHEKKMKLAFKSLDKNNDGKIEASEIVQSLQTLGLT), and 122–157 (ISEQQAELILQSIDVDGTMTVDWNEWRDYFLFNPVT). The Ca(2+) site is built by D32, N34, D36, V38, E43, D68, N70, D72, K74, E79, D99, N101, D103, K105, E110, D135, D137, T139, T141, and E146. The segment at 159 to 168 (IEEIIRFWKH) is linker region. Residues 174-477 (IGDSLTIPDE…MKQTLGVTQK (304 aa)) are C-terminal transmembrane transporter domain. Solcar repeat units follow at residues 192 to 278 (GQWW…YKKL), 286 to 371 (IGTF…LKSY), and 383 to 471 (PGVM…MKQT). The helical transmembrane segment at 198-215 (LLAGGIAGAVSRTSTAPL) threads the bilayer. At 216 to 252 (DRLKIMMQVHGSKSDKMNIFGGFRQMVKEGGIRSLWR) the chain is on the mitochondrial matrix side. The helical transmembrane segment at 253-272 (GNGTNVIKIAPETAVKFWAY) threads the bilayer. Residues 273–295 (EQYKKLLTEEGQKIGTFERFISG) are Mitochondrial intermembrane-facing. A helical transmembrane segment spans residues 296–309 (SMAGATAQTFIYPM). Topologically, residues 310 to 345 (EVMKTRLAVGKTGQYSGIYDCAKKILKHEGLGAFYK) are mitochondrial matrix. K320 carries the post-translational modification N6-acetyllysine; alternate. K320 is modified (N6-succinyllysine; alternate). K336 is modified (N6-acetyllysine). A helical membrane pass occupies residues 346-365 (GYVPNLLGIIPYAGIDLAVY). The Mitochondrial intermembrane portion of the chain corresponds to 366–388 (ELLKSYWLDNFAKDSVNPGVMVL). The helical transmembrane segment at 389 to 406 (LGCGALSSTCGQLASYPL) threads the bilayer. At 407–445 (ALVRTRMQAQAMLEGSPQLNMVGLFRRIISKEGIPGLYR) the chain is on the mitochondrial matrix side. K437 carries the post-translational modification N6-acetyllysine; alternate. The residue at position 437 (K437) is an N6-succinyllysine; alternate. A helical transmembrane segment spans residues 446-465 (GITPNFMKVLPAVGISYVVY). The Mitochondrial intermembrane segment spans residues 466–477 (ENMKQTLGVTQK).

Belongs to the mitochondrial carrier (TC 2.A.29) family. Monomer. In terms of tissue distribution, expressed in all tissues tested. Highly expressed in testis, expressed at intermediate level in small intestine and pancreas, and weakly expressed in kidney, spleen, liver, skeletal muscle and heart.

Its subcellular location is the mitochondrion inner membrane. It catalyses the reaction Mg(2+)(out) + phosphate(in) + ATP(out) = Mg(2+)(in) + phosphate(out) + ATP(in). The enzyme catalyses ADP(out) + phosphate(in) + H(+)(out) = ADP(in) + phosphate(out) + H(+)(in). The catalysed reaction is AMP(out) + phosphate(in) = AMP(in) + phosphate(out). It carries out the reaction phosphate(in) + ATP(out) + 2 H(+)(out) = phosphate(out) + ATP(in) + 2 H(+)(in). It catalyses the reaction dADP(in) + ADP(out) = dADP(out) + ADP(in). The enzyme catalyses Mg(2+)(in) + ADP(out) + ATP(in) + H(+)(out) = Mg(2+)(out) + ADP(in) + ATP(out) + H(+)(in). The catalysed reaction is ADP(out) + diphosphate(in) = ADP(in) + diphosphate(out). It carries out the reaction dAMP(in) + ADP(out) + H(+)(out) = dAMP(out) + ADP(in) + H(+)(in). It catalyses the reaction 3'-AMP(in) + ADP(out) + H(+)(out) = 3'-AMP(out) + ADP(in) + H(+)(in). The enzyme catalyses dAMP(out) + phosphate(in) = dAMP(in) + phosphate(out). The catalysed reaction is 3'-AMP(out) + phosphate(in) = 3'-AMP(in) + phosphate(out). It carries out the reaction dADP(out) + phosphate(in) + H(+)(out) = dADP(in) + phosphate(out) + H(+)(in). Activated by an increase in cytosolic calcium levels that induce a conformational change of the N-terminal regulatory domain, uncapping the channel and allowing transport. Inhibited by bathophenanthroline, mersalyl, p-hydroxymercuribenzoate, bromcresol purple and tannic acid. In terms of biological role, electroneutral antiporter that mediates the transport of adenyl nucleotides through the inner mitochondrial membrane. Originally identified as an ATP-magnesium/inorganic phosphate antiporter, it also acts as a broad specificity adenyl nucleotide antiporter. By regulating the mitochondrial matrix adenyl nucleotide pool could adapt to changing cellular energetic demands and indirectly regulate adenyl nucleotide-dependent metabolic pathways. In vitro, a low activity is also observed with guanyl and pyrimidine nucleotides. May play a role in protecting cells against oxidative stress-induced cell death, by buffering calcium levels in the mitochondrial matrix through the formation of calcium-phosphate precipitates. This Homo sapiens (Human) protein is Mitochondrial adenyl nucleotide antiporter SLC25A24.